The sequence spans 96 residues: Large ribosomal subunit protein bL21 (96 aa).

It belongs to the bacterial ribosomal protein bL21 family. As to quaternary structure, part of the 50S ribosomal subunit. Contacts protein L20.

This protein binds to 23S rRNA in the presence of protein L20. The polypeptide is Large ribosomal subunit protein bL21 (Hydrogenobaculum sp. (strain Y04AAS1)).